Here is a 517-residue protein sequence, read N- to C-terminus: Ammonium transporter 3 (517 aa).

Topologically, residues 1 to 32 (MLNEPNALLRRDANSTIATVTELFPNEYSNAD) are extracellular. A helical transmembrane segment spans residues 33 to 53 (IAYVLLSTVVVFTVTPGIALY). Over 54 to 69 (YAGMVRKNSALSILTQ) the chain is Cytoplasmic. A helical transmembrane segment spans residues 70–90 (SFLVTAVVFIQWYLFGYSLAC). Residues 91–118 (SSGSSFYGTLWQGGMNHLWLEPYIPGST) are Extracellular-facing. The chain crosses the membrane as a helical span at residues 119 to 139 (IPAIVYFPFGGLFAVATAQLF). Residues 140–148 (AGAMAERGR) are Cytoplasmic-facing. Residues 149–169 (LIPSLVISFLYITLVYCPQAY) traverse the membrane as a helical segment. Over 170–180 (WTWAPNGWLYT) the chain is Extracellular. A helical membrane pass occupies residues 181 to 201 (LGALDFAGGGPVHISSGFAAL). The Cytoplasmic segment spans residues 202–272 (AYSLCLGRRI…AHNPPHDAGM (71 aa)). Residues 273–293 (VYIGVVLIWFAWLCFNSGTLL) traverse the membrane as a helical segment. Residues 294 to 299 (TVNIRT) lie on the Extracellular side of the membrane. The helical transmembrane segment at 300–320 (AYIMTNTLISSSFGALTWAII) threads the bilayer. The Cytoplasmic portion of the chain corresponds to 321–327 (DYIRYRK). Residues 328-348 (FSTIGICEGAIAGLVGITPAC) traverse the membrane as a helical segment. Position 349 (glycine 349) is a topological domain, extracellular. A helical membrane pass occupies residues 350–370 (FVFPWGAAAGGIVPALVCNFL). The Cytoplasmic segment spans residues 371 to 384 (HDLNEWIGVDETLR). The chain crosses the membrane as a helical span at residues 385–405 (VFNLHGIGGIVGSIVLGVVAH). Residues 406-432 (PDVAASDGATVIDGGWAVHHWKQMGYQ) are Extracellular-facing. A helical membrane pass occupies residues 433-453 (FAGFTSVAAWSFVITAIICLL). Over 454-517 (VDLVPGLHIR…NIKQEKQDEF (64 aa)) the chain is Cytoplasmic.

It belongs to the ammonia transporter channel (TC 1.A.11.2) family.

The protein localises to the membrane. Transporter for ammonium to use as a nitrogen source. This Schizosaccharomyces pombe (strain 972 / ATCC 24843) (Fission yeast) protein is Ammonium transporter 3 (amt3).